Consider the following 545-residue polypeptide: CTP synthase (545 aa).

The segment at 1-266 (MTTNYIFVTG…DDYICKRFSL (266 aa)) is amidoligase domain. Residue S14 participates in CTP binding. S14 provides a ligand contact to UTP. ATP contacts are provided by residues 15-20 (SLGKGI) and D72. Residues D72 and E140 each contribute to the Mg(2+) site. Residues 147–149 (DIE), 187–192 (KTKPTQ), and K223 contribute to the CTP site. UTP-binding positions include 187–192 (KTKPTQ) and K223. 239–241 (KDV) contacts ATP. One can recognise a Glutamine amidotransferase type-1 domain in the interval 291–542 (NIGMVGKYVE…VKAASEYQKR (252 aa)). G352 is an L-glutamine binding site. The active-site Nucleophile; for glutamine hydrolysis is C379. L-glutamine is bound by residues 380 to 383 (LGMQ), E403, and R470. Active-site residues include H515 and E517.

The protein belongs to the CTP synthase family. As to quaternary structure, homotetramer.

It carries out the reaction UTP + L-glutamine + ATP + H2O = CTP + L-glutamate + ADP + phosphate + 2 H(+). The catalysed reaction is L-glutamine + H2O = L-glutamate + NH4(+). The enzyme catalyses UTP + NH4(+) + ATP = CTP + ADP + phosphate + 2 H(+). It participates in pyrimidine metabolism; CTP biosynthesis via de novo pathway; CTP from UDP: step 2/2. With respect to regulation, allosterically activated by GTP, when glutamine is the substrate; GTP has no effect on the reaction when ammonia is the substrate. The allosteric effector GTP functions by stabilizing the protein conformation that binds the tetrahedral intermediate(s) formed during glutamine hydrolysis. Inhibited by the product CTP, via allosteric rather than competitive inhibition. Its function is as follows. Catalyzes the ATP-dependent amination of UTP to CTP with either L-glutamine or ammonia as the source of nitrogen. Regulates intracellular CTP levels through interactions with the four ribonucleotide triphosphates. The chain is CTP synthase from Erwinia tasmaniensis (strain DSM 17950 / CFBP 7177 / CIP 109463 / NCPPB 4357 / Et1/99).